A 281-amino-acid chain; its full sequence is 2-hydroxymuconate semialdehyde hydrolase (281 aa).

A disordered region spans residues 30 to 55 (FPALLIHGSGPASPPGPTGAGSFRSS). Residues 31–261 (PALLIHGSGP…QCGHWTQIEH (231 aa)) form the AB hydrolase-1 domain. Catalysis depends on residues Ser-106, Asp-227, and His-255.

This sequence belongs to the DmpD/TodF/XylF esterase family.

It catalyses the reaction (2Z,4E)-2-hydroxy-6-oxohexa-2,4-dienoate + H2O = 2-oxopent-4-enoate + formate + H(+). Its pathway is aromatic compound metabolism; benzoate degradation via hydroxylation. Catalyzes the conversion of 2-hydroxymuconate semialdehyde to 2-hydroxypent-2,4-dienoate. This chain is 2-hydroxymuconate semialdehyde hydrolase (xylF), found in Pseudomonas putida (Arthrobacter siderocapsulatus).